A 253-amino-acid polypeptide reads, in one-letter code: Methionine aminopeptidase A (253 aa).

Residue His-80 participates in substrate binding. A divalent metal cation is bound by residues Asp-98, Asp-109, and His-172. Residue His-179 coordinates substrate. Positions 205 and 236 each coordinate a divalent metal cation.

This sequence belongs to the peptidase M24A family. Methionine aminopeptidase type 1 subfamily. In terms of assembly, monomer. Requires Co(2+) as cofactor. Zn(2+) serves as cofactor. Mn(2+) is required as a cofactor. It depends on Fe(2+) as a cofactor.

The catalysed reaction is Release of N-terminal amino acids, preferentially methionine, from peptides and arylamides.. Removes the N-terminal methionine from nascent proteins. The N-terminal methionine is often cleaved when the second residue in the primary sequence is small and uncharged (Met-Ala-, Cys, Gly, Pro, Ser, Thr, or Val). Requires deformylation of the N(alpha)-formylated initiator methionine before it can be hydrolyzed. The sequence is that of Methionine aminopeptidase A from Synechocystis sp. (strain ATCC 27184 / PCC 6803 / Kazusa).